Here is a 961-residue protein sequence, read N- to C-terminus: Copper-exporting P-type ATPase (961 aa).

HMA domains lie at 3-64 (QTTL…YQAT) and 69-130 (PDVE…YHAT). 4 residues coordinate Cu(+): cysteine 14, cysteine 17, cysteine 80, and cysteine 83. 2 disordered regions span residues 131-153 (QQGI…PESL) and 178-201 (VLPT…TASA). A compositionally biased stretch (polar residues) spans 142–151 (LTHSAQSQPE). Residues 226-289 (ESVQLLLTGM…AVKNAGYGAE (64 aa)) form the HMA 3 domain. Cu(+) is bound by residues cysteine 237 and cysteine 240. The next 5 helical transmembrane spans lie at 316–336 (AALG…GGSM), 345–365 (PWLI…GHFY), 381–401 (TLVA…NIWP), 565–585 (AVFV…WYFF), and 592–612 (VYTL…ALGL). The 4-aspartylphosphate intermediate role is filled by aspartate 650. Residues aspartate 847 and aspartate 851 each contribute to the Mg(2+) site. A run of 3 helical transmembrane segments spans residues 860–880 (VGIA…ITLM), 906–926 (LGAF…LYPF), and 928–948 (GTLL…ITVV).

This sequence belongs to the cation transport ATPase (P-type) (TC 3.A.3) family. Type IB subfamily.

It localises to the cell membrane. The catalysed reaction is Cu(+)(in) + ATP + H2O = Cu(+)(out) + ADP + phosphate + H(+). Functionally, involved in copper export. This chain is Copper-exporting P-type ATPase (copA), found in Yersinia pestis.